Consider the following 324-residue polypeptide: tRNA U34 carboxymethyltransferase (324 aa).

Residues Lys91, Trp105, Lys110, Gly130, 152–154, 181–182, Met196, Tyr200, and Arg315 contribute to the carboxy-S-adenosyl-L-methionine site; these read DPS and IE.

Belongs to the class I-like SAM-binding methyltransferase superfamily. CmoB family. In terms of assembly, homotetramer.

The catalysed reaction is carboxy-S-adenosyl-L-methionine + 5-hydroxyuridine(34) in tRNA = 5-carboxymethoxyuridine(34) in tRNA + S-adenosyl-L-homocysteine + H(+). Functionally, catalyzes carboxymethyl transfer from carboxy-S-adenosyl-L-methionine (Cx-SAM) to 5-hydroxyuridine (ho5U) to form 5-carboxymethoxyuridine (cmo5U) at position 34 in tRNAs. The polypeptide is tRNA U34 carboxymethyltransferase (Photobacterium profundum (strain SS9)).